The chain runs to 470 residues: 3-isopropylmalate dehydratase large subunit (470 aa).

The [4Fe-4S] cluster site is built by C348, C409, and C412.

This sequence belongs to the aconitase/IPM isomerase family. LeuC type 1 subfamily. Heterodimer of LeuC and LeuD. [4Fe-4S] cluster is required as a cofactor.

The catalysed reaction is (2R,3S)-3-isopropylmalate = (2S)-2-isopropylmalate. It participates in amino-acid biosynthesis; L-leucine biosynthesis; L-leucine from 3-methyl-2-oxobutanoate: step 2/4. Catalyzes the isomerization between 2-isopropylmalate and 3-isopropylmalate, via the formation of 2-isopropylmaleate. The chain is 3-isopropylmalate dehydratase large subunit from Acidithiobacillus ferrooxidans (strain ATCC 23270 / DSM 14882 / CIP 104768 / NCIMB 8455) (Ferrobacillus ferrooxidans (strain ATCC 23270)).